Consider the following 72-residue polypeptide: MDMKLLAAGIAVLAGIGAGIGIGIATAGALEATARQPEASDKIQSLFIMGAGLSEATAIYGLVVSIILLFVA.

2 consecutive transmembrane segments (helical) span residues 5–25 (LLAA…IGIA) and 51–71 (AGLS…LLFV).

This sequence belongs to the ATPase C chain family. F-type ATPases have 2 components, F(1) - the catalytic core - and F(0) - the membrane proton channel. F(1) has five subunits: alpha(3), beta(3), gamma(1), delta(1), epsilon(1). F(0) has three main subunits: a(1), b(2) and c(10-14). The alpha and beta chains form an alternating ring which encloses part of the gamma chain. F(1) is attached to F(0) by a central stalk formed by the gamma and epsilon chains, while a peripheral stalk is formed by the delta and b chains.

Its subcellular location is the cell membrane. Its function is as follows. F(1)F(0) ATP synthase produces ATP from ADP in the presence of a proton or sodium gradient. F-type ATPases consist of two structural domains, F(1) containing the extramembraneous catalytic core and F(0) containing the membrane proton channel, linked together by a central stalk and a peripheral stalk. During catalysis, ATP synthesis in the catalytic domain of F(1) is coupled via a rotary mechanism of the central stalk subunits to proton translocation. In terms of biological role, key component of the F(0) channel; it plays a direct role in translocation across the membrane. A homomeric c-ring of between 10-14 subunits forms the central stalk rotor element with the F(1) delta and epsilon subunits. The sequence is that of ATP synthase subunit c from Clostridium perfringens (strain ATCC 13124 / DSM 756 / JCM 1290 / NCIMB 6125 / NCTC 8237 / Type A).